A 224-amino-acid chain; its full sequence is Enolase-phosphatase E1 (224 aa).

It belongs to the HAD-like hydrolase superfamily. MasA/MtnC family. As to quaternary structure, monomer. It depends on Mg(2+) as a cofactor.

It carries out the reaction 5-methylsulfanyl-2,3-dioxopentyl phosphate + H2O = 1,2-dihydroxy-5-(methylsulfanyl)pent-1-en-3-one + phosphate. It participates in amino-acid biosynthesis; L-methionine biosynthesis via salvage pathway; L-methionine from S-methyl-5-thio-alpha-D-ribose 1-phosphate: step 3/6. The protein operates within amino-acid biosynthesis; L-methionine biosynthesis via salvage pathway; L-methionine from S-methyl-5-thio-alpha-D-ribose 1-phosphate: step 4/6. Bifunctional enzyme that catalyzes the enolization of 2,3-diketo-5-methylthiopentyl-1-phosphate (DK-MTP-1-P) into the intermediate 2-hydroxy-3-keto-5-methylthiopentenyl-1-phosphate (HK-MTPenyl-1-P), which is then dephosphorylated to form the acireductone 1,2-dihydroxy-3-keto-5-methylthiopentene (DHK-MTPene). The sequence is that of Enolase-phosphatase E1 from Thioalkalivibrio sulfidiphilus (strain HL-EbGR7).